A 241-amino-acid polypeptide reads, in one-letter code: Sugar fermentation stimulation protein homolog (241 aa).

Belongs to the SfsA family.

This is Sugar fermentation stimulation protein homolog from Yersinia enterocolitica serotype O:8 / biotype 1B (strain NCTC 13174 / 8081).